Reading from the N-terminus, the 2567-residue chain is Unconventional myosin-XVIIIb (2567 aa).

The disordered stretch occupies residues 41 to 508; it reads LVRGTEKEAK…SRDSDQAPED (468 aa). The span at 44-54 shows a compositional bias: basic and acidic residues; that stretch reads GTEKEAKEARQ. Positions 71-104 are enriched in low complexity; the sequence is SISQPNSKSSSGTRSGSQQISQDDQSSSPGSSDI. 2 stretches are compositionally biased toward basic and acidic residues: residues 105–116 and 160–176; these read LGKESEGSRSPD and LDPD…HDAP. Over residues 196-206 the composition is skewed to polar residues; that stretch reads SRTPCGSQAST. 3 stretches are compositionally biased toward basic and acidic residues: residues 251–265, 278–287, and 326–349; these read TELK…DRQG, RPGKAEKEGA, and SKWD…EKTG. The segment covering 350–362 has biased composition (polar residues); it reads EPQTQMEKTSQVQ. 4 stretches are compositionally biased toward basic and acidic residues: residues 367–377, 410–420, 471–485, and 492–508; these read DDLRMGEKAGE, SQTEKGCEAPK, LEKD…KENQ, and EEGK…APED. The 763-residue stretch at 571–1333 folds into the Myosin motor domain; that stretch reads DQVEDLASLI…VISRLEKQRE (763 aa). 660 to 667 lines the ATP pocket; the sequence is GWSGAGKT. The tract at residues 1208–1232 is disordered; the sequence is VESRSGQESPPPPQPGRDKPGAGGP. A GPA region spans residues 1213 to 1240; it reads GQESPPPPQPGRDKPGAGGPLALDIPAL. A Phosphoserine modification is found at Ser1216. The IQ domain maps to 1336–1365; that stretch reads VSQSIVLFQAACKGFLSRQEFKKLKIRRLA. Coiled coils occupy residues 1396–1783, 1825–1961, and 2014–2090; these read SATI…GLIG, KTSV…STVD, and ESQQ…VASS. The interval 1426–2083 is tail; that stretch reads NELRQNTDLL…IRRIADLQAA (658 aa). Phosphoserine is present on Ser1829. Residues 2139–2153 show a composition bias toward polar residues; sequence TMRTPSRQSATSSRI. 2 disordered regions span residues 2139-2194 and 2217-2249; these read TMRT…PVSP and STER…PSAA. A compositionally biased stretch (basic and acidic residues) spans 2158–2167; that stretch reads INEEAGDTER. The segment covering 2168–2185 has biased composition (polar residues); sequence TQSALALSRARSTNVHSK. Ser2193 carries the post-translational modification Phosphoserine. A compositionally biased stretch (polar residues) spans 2227–2238; the sequence is PLASRSTNTSPL. Residues Ser2296 and Ser2309 each carry the phosphoserine modification. The disordered stretch occupies residues 2357–2376; the sequence is SRPSMGRKLSSPTTPRDMLL. Residue Ser2377 is modified to Phosphoserine. Disordered stretches follow at residues 2444 to 2471 and 2494 to 2567; these read FLPA…SQRS and KSPE…YLQK. Positions 2494 to 2504 are enriched in basic and acidic residues; the sequence is KSPEPKEDPAH. A compositionally biased stretch (low complexity) spans 2506-2520; the sequence is SDSSSSSGSIVSFKS. Over residues 2537–2556 the composition is skewed to basic and acidic residues; sequence GGERTSPERREPGTGRKDDD.

This sequence belongs to the TRAFAC class myosin-kinesin ATPase superfamily. Myosin family. Homodimer. May interact with F actin through the GPA motif (Gly/Pro/Ala-rich). Selectively expressed in cardiac and skeletal muscles. Weakly expressed in testis, pancreas, placenta, prostate, lung and thymus.

It localises to the cytoplasm. The protein localises to the nucleus. Its subcellular location is the myofibril. It is found in the sarcomere. Its function is as follows. May be involved in intracellular trafficking of the muscle cell when in the cytoplasm, whereas entering the nucleus, may be involved in the regulation of muscle specific genes. May play a role in the control of tumor development and progression; restored MYO18B expression in lung cancer cells suppresses anchorage-independent growth. The chain is Unconventional myosin-XVIIIb (MYO18B) from Homo sapiens (Human).